Here is a 197-residue protein sequence, read N- to C-terminus: MALNNPNPTIRVLYATDSCVITYSLMLLTGQESSEDAYVISYDWSSELDDLFGSQPRVLDADVGDSWDTTDQSDEELLAAALLERKPSVSFCLLSGIVGGASDEPQERIRPMFVCAFLTLTGARALTKTLLHGHPISSKILLQALVDGDTFQLHNDLILALAITLDNATARTGRTAAAAKYDPQRGSVKAAILGHST.

This sequence belongs to the herpesviridae UL52 family.

Its function is as follows. Involved in DNA replication. The sequence is that of DNA helicase/primase complex protein (7) from Equus caballus (Horse).